Reading from the N-terminus, the 363-residue chain is Chorismate synthase (363 aa).

NADP(+) contacts are provided by arginine 48 and arginine 54. FMN contacts are provided by residues 125–127, 237–238, glycine 277, 292–296, and arginine 318; these read RSS, NA, and KPTSS.

The protein belongs to the chorismate synthase family. In terms of assembly, homotetramer. FMNH2 is required as a cofactor.

It carries out the reaction 5-O-(1-carboxyvinyl)-3-phosphoshikimate = chorismate + phosphate. It functions in the pathway metabolic intermediate biosynthesis; chorismate biosynthesis; chorismate from D-erythrose 4-phosphate and phosphoenolpyruvate: step 7/7. Catalyzes the anti-1,4-elimination of the C-3 phosphate and the C-6 proR hydrogen from 5-enolpyruvylshikimate-3-phosphate (EPSP) to yield chorismate, which is the branch point compound that serves as the starting substrate for the three terminal pathways of aromatic amino acid biosynthesis. This reaction introduces a second double bond into the aromatic ring system. The protein is Chorismate synthase of Pseudomonas savastanoi pv. phaseolicola (strain 1448A / Race 6) (Pseudomonas syringae pv. phaseolicola (strain 1448A / Race 6)).